A 349-amino-acid chain; its full sequence is Protein-glutamate methylesterase/protein-glutamine glutaminase 1 (349 aa).

A Response regulatory domain is found at arginine 2–valine 119. The residue at position 53 (aspartate 53) is a 4-aspartylphosphate. The 188-residue stretch at isoleucine 158–lysine 345 folds into the CheB-type methylesterase domain. Residues serine 163, histidine 190, and aspartate 287 contribute to the active site.

It belongs to the CheB family. In terms of processing, phosphorylated by CheA. Phosphorylation of the N-terminal regulatory domain activates the methylesterase activity.

It is found in the cytoplasm. The catalysed reaction is [protein]-L-glutamate 5-O-methyl ester + H2O = L-glutamyl-[protein] + methanol + H(+). It catalyses the reaction L-glutaminyl-[protein] + H2O = L-glutamyl-[protein] + NH4(+). In terms of biological role, involved in chemotaxis. Part of a chemotaxis signal transduction system that modulates chemotaxis in response to various stimuli. Catalyzes the demethylation of specific methylglutamate residues introduced into the chemoreceptors (methyl-accepting chemotaxis proteins or MCP) by CheR. Also mediates the irreversible deamidation of specific glutamine residues to glutamic acid. The chain is Protein-glutamate methylesterase/protein-glutamine glutaminase 1 from Methanosarcina acetivorans (strain ATCC 35395 / DSM 2834 / JCM 12185 / C2A).